Reading from the N-terminus, the 66-residue chain is Repressor protein C4 (66 aa).

In terms of biological role, repressor of the ant/reb gene. This Escherichia phage P1 (Bacteriophage P1) protein is Repressor protein C4 (C4).